The chain runs to 131 residues: MKKIEKTLDEWRSMLDPEQYQVCRLKGTERPFSGKYNSERRDGIYHCICCGLPLFDAQTKFDAGCGWPSFYAPIEDSAMIEIRDTSHGMIRTEVTCARCDAHLGHVFPDGPPPTGLRYCINSVCIDLRPRD.

One can recognise a MsrB domain in the interval 8–130 (LDEWRSMLDP…NSVCIDLRPR (123 aa)). Zn(2+) contacts are provided by C47, C50, C96, and C99. Catalysis depends on C119, which acts as the Nucleophile.

Belongs to the MsrB Met sulfoxide reductase family. Zn(2+) serves as cofactor.

It carries out the reaction L-methionyl-[protein] + [thioredoxin]-disulfide + H2O = L-methionyl-(R)-S-oxide-[protein] + [thioredoxin]-dithiol. This is Peptide methionine sulfoxide reductase MsrB from Pseudomonas putida (strain ATCC 47054 / DSM 6125 / CFBP 8728 / NCIMB 11950 / KT2440).